Consider the following 694-residue polypeptide: Protein NPGR1 (694 aa).

The segment at 12–40 is disordered; the sequence is FEDQPGSPESLATRDFSASGLSSRNGGGD. TPR repeat units lie at residues 32–65, 66–101, 135–168, 188–221, 307–340, 551–584, 585–618, 620–654, and 655–688; these read LSSRNGGGDWDSKLEDIQVDEAESTLKEALSLNY, EEARALLGRLEYQRGNFDAALQVFKGIDIKVLTPRI, LEAILLKARSLEELGSYKEAAEECKIILDVVENA, QKALELLPLLWKKAGNHHETIASYRRALSRPWNL, GERWYLLSLCYSAAGIDKAAINLLKMALGPSESR, TEAWQDLASVYGKLGSWSDAETCLEKARSMCYYS, PRGWNETGLCLEAKSLHEEALISFFLSLSIEPDH, PSIVSIAEVMMKSGDESLPTAKSFLMNALRLDPRN, and HDAWMKLGHVAKKQGLSQQAAEFYQAAYELELSA.

As to quaternary structure, interacts with calmodulin in a calcium-dependent manner. In terms of tissue distribution, expressed in pollen, flowers, fruits and leaves.

The polypeptide is Protein NPGR1 (Arabidopsis thaliana (Mouse-ear cress)).